A 252-amino-acid chain; its full sequence is Imidazole glycerol phosphate synthase subunit HisF (252 aa).

Catalysis depends on residues Asp11 and Asp130.

Belongs to the HisA/HisF family. As to quaternary structure, heterodimer of HisH and HisF.

Its subcellular location is the cytoplasm. The catalysed reaction is 5-[(5-phospho-1-deoxy-D-ribulos-1-ylimino)methylamino]-1-(5-phospho-beta-D-ribosyl)imidazole-4-carboxamide + L-glutamine = D-erythro-1-(imidazol-4-yl)glycerol 3-phosphate + 5-amino-1-(5-phospho-beta-D-ribosyl)imidazole-4-carboxamide + L-glutamate + H(+). The protein operates within amino-acid biosynthesis; L-histidine biosynthesis; L-histidine from 5-phospho-alpha-D-ribose 1-diphosphate: step 5/9. IGPS catalyzes the conversion of PRFAR and glutamine to IGP, AICAR and glutamate. The HisF subunit catalyzes the cyclization activity that produces IGP and AICAR from PRFAR using the ammonia provided by the HisH subunit. The protein is Imidazole glycerol phosphate synthase subunit HisF of Persephonella marina (strain DSM 14350 / EX-H1).